We begin with the raw amino-acid sequence, 179 residues long: MAIEILRLGHRGERDKRISTHVALTSRALGAEKIIFTEDDKHVKESVERIVESWGGEFKFEVVKSWRTYTRRFKDNGIVVHLTMYGENINKIMTEIREDISKTNKNLLLIIGAEKVPREAYDLADYNLSVGNQPHSEVAALAIFLDRLTEGKTLYSEYDDAKIKVTPSKSEKCVFVEKD.

S-adenosyl-L-methionine contacts are provided by residues Leu82, 112-116, and 130-137; these read GAEKV and VGNQPHSE.

The protein belongs to the aTrm56 family. Homodimer.

It localises to the cytoplasm. It catalyses the reaction cytidine(56) in tRNA + S-adenosyl-L-methionine = 2'-O-methylcytidine(56) in tRNA + S-adenosyl-L-homocysteine + H(+). Specifically catalyzes the AdoMet-dependent 2'-O-ribose methylation of cytidine at position 56 in tRNAs. This chain is tRNA (cytidine(56)-2'-O)-methyltransferase, found in Methanococcus maripaludis (strain C7 / ATCC BAA-1331).